A 214-amino-acid polypeptide reads, in one-letter code: MLTVALPKGELLKNSIRLLQSVGLDFSAFLDSGTRQLQIPDTKGLAKALLVRAQDVPVYVEYGQAQLGVVGYDVLREKQPQVAHLVDLQFGYCRMSVAVKASSSYRSPLDLPPHGRVASKYVNCAREYFHSLDLPVEIVPLYGSVELGPITGMSEAIVDLVSTGRTMRENGLIEIATLYESTARLIAHPLSYRMNTGNLSDVIAKLREAVLVEV.

This sequence belongs to the ATP phosphoribosyltransferase family. Short subfamily. In terms of assembly, heteromultimer composed of HisG and HisZ subunits.

It is found in the cytoplasm. The enzyme catalyses 1-(5-phospho-beta-D-ribosyl)-ATP + diphosphate = 5-phospho-alpha-D-ribose 1-diphosphate + ATP. It functions in the pathway amino-acid biosynthesis; L-histidine biosynthesis; L-histidine from 5-phospho-alpha-D-ribose 1-diphosphate: step 1/9. Catalyzes the condensation of ATP and 5-phosphoribose 1-diphosphate to form N'-(5'-phosphoribosyl)-ATP (PR-ATP). Has a crucial role in the pathway because the rate of histidine biosynthesis seems to be controlled primarily by regulation of HisG enzymatic activity. The chain is ATP phosphoribosyltransferase from Nostoc punctiforme (strain ATCC 29133 / PCC 73102).